Reading from the N-terminus, the 309-residue chain is Probable L,D-transpeptidase ErfK/SrfK (309 aa).

The N-terminal stretch at 1 to 21 (MRRITPFFPFFVLLVSHFSLA) is a signal peptide. The 136-residue stretch at 96–231 (EGIVVNVAEM…VPVGTRVQII (136 aa)) folds into the L,D-TPase catalytic domain. The active-site Proton donor/acceptor is the His191. Catalysis depends on Cys207, which acts as the Nucleophile.

Belongs to the YkuD family.

The protein resides in the periplasm. It participates in cell wall biogenesis; peptidoglycan biosynthesis. This chain is Probable L,D-transpeptidase ErfK/SrfK (erfK), found in Salmonella typhimurium (strain LT2 / SGSC1412 / ATCC 700720).